Consider the following 416-residue polypeptide: Gamma-glutamyl phosphate reductase (416 aa).

This sequence belongs to the gamma-glutamyl phosphate reductase family.

The protein resides in the cytoplasm. It carries out the reaction L-glutamate 5-semialdehyde + phosphate + NADP(+) = L-glutamyl 5-phosphate + NADPH + H(+). The protein operates within amino-acid biosynthesis; L-proline biosynthesis; L-glutamate 5-semialdehyde from L-glutamate: step 2/2. Catalyzes the NADPH-dependent reduction of L-glutamate 5-phosphate into L-glutamate 5-semialdehyde and phosphate. The product spontaneously undergoes cyclization to form 1-pyrroline-5-carboxylate. This is Gamma-glutamyl phosphate reductase from Leptospira borgpetersenii serovar Hardjo-bovis (strain JB197).